A 253-amino-acid chain; its full sequence is Low affinity immunoglobulin gamma Fc region receptor III-A (253 aa).

Positions 1-20 are cleaved as a signal peptide; sequence MGQPLPPVALLLLVSASSRA. The Extracellular portion of the chain corresponds to 21 to 207; that stretch reads ADVPKALVLL…ISSSVLPWHQ (187 aa). 2 consecutive Ig-like C2-type domains span residues 24-90 and 99-189; these read PKAL…YRCQ and PVQL…VTIT. Disulfide bonds link cysteine 47/cysteine 89 and cysteine 128/cysteine 172. N-linked (GlcNAc...) asparagine glycosylation is found at asparagine 56, asparagine 63, asparagine 165, and asparagine 180. The helical transmembrane segment at 208–226 threads the bilayer; sequence IAFCLVMGLLLAADTGLYF. Residues 227–253 are Cytoplasmic-facing; sequence SVQRDLRSSQRARKEHTLGWSLGSQDK.

Forms a heterooligomeric complex with ITAM-containing signaling subunits FCER1G. Interacts (via transmembrane domain) with signaling subunits; this interaction is a prerequisite for receptor complex expression on the cell surface and intracellular signal transduction. Binds the Fc region of antigen-complexed IgG.

The protein resides in the cell membrane. Its function is as follows. Receptor for the invariable Fc fragment of immunoglobulin gamma (IgG). Optimally activated upon binding of clustered antigen-IgG complexes displayed on cell surfaces, triggers lysis of antibody-coated cells, a process known as antibody-dependent cellular cytotoxicity (ADCC). Does not bind free monomeric IgG, thus avoiding inappropriate effector cell activation in the absence of antigenic trigger. Mediates IgG effector functions on natural killer (NK) cells. Binds antigen-IgG complexes generated upon infection and triggers NK cell-dependent cytokine production and degranulation to limit viral load and propagation. Fc-binding subunit that associates with FCER1G adapter to form functional signaling complexes. Following the engagement of antigen-IgG complexes, triggers phosphorylation of immunoreceptor tyrosine-based activation motif (ITAM)-containing adapters with subsequent activation of phosphatidylinositol 3-kinase signaling and sustained elevation of intracellular calcium that ultimately drive NK cell activation. Mediates enhanced ADCC in response to afucosylated IgGs. This is Low affinity immunoglobulin gamma Fc region receptor III-A from Oryctolagus cuniculus (Rabbit).